The chain runs to 472 residues: Sarcalumenin (472 aa).

Positions 1-20 (MKRLNLLCCCVASLLLLGTA) are cleaved as a signal peptide. An N-linked (GlcNAc...) asparagine glycan is attached at L59. The region spanning 89 to 330 (ITSKPMVLFL…IENRMENKIA (242 aa)) is the Dynamin-type G domain. The G1 motif stretch occupies residues 99–106 (GPWSVGKS). The G2 motif stretch occupies residues 127-128 (EP). The G3 motif stretch occupies residues 189 to 192 (DTPG). A G4 motif region spans residues 254-257 (NKAD). Position 278 (L278) is a region of interest, G5 motif. N-linked (GlcNAc...) asparagine glycosylation is found at N280 and N388.

The protein belongs to the TRAFAC class dynamin-like GTPase superfamily. Dynamin/Fzo/YdjA family. N-glycosylated.

It localises to the sarcoplasmic reticulum lumen. Its subcellular location is the sarcoplasmic reticulum membrane. This Gallus gallus (Chicken) protein is Sarcalumenin (SRL).